Here is a 522-residue protein sequence, read N- to C-terminus: Probable protein kinase UbiB (522 aa).

The Protein kinase domain maps to 119-497 (SFERVPVASA…QRRTNRLLQS (379 aa)). ATP contacts are provided by residues 125–133 (VASASIAQV) and Lys151. Asp286 acts as the Proton acceptor in catalysis. Residues 496 to 516 (QSIIYGGMGFVLGLLALQFLI) traverse the membrane as a helical segment.

Belongs to the ABC1 family. UbiB subfamily.

The protein localises to the cell inner membrane. Its pathway is cofactor biosynthesis; ubiquinone biosynthesis [regulation]. Its function is as follows. Is probably a protein kinase regulator of UbiI activity which is involved in aerobic coenzyme Q (ubiquinone) biosynthesis. In Paracidovorax citrulli (strain AAC00-1) (Acidovorax citrulli), this protein is Probable protein kinase UbiB.